The sequence spans 299 residues: Ribosomal RNA small subunit methyltransferase H 1 (299 aa).

S-adenosyl-L-methionine is bound by residues 31–33, Asp50, Phe76, Asp97, and Gln104; that span reads GGH.

The protein belongs to the methyltransferase superfamily. RsmH family.

The protein resides in the cytoplasm. The catalysed reaction is cytidine(1402) in 16S rRNA + S-adenosyl-L-methionine = N(4)-methylcytidine(1402) in 16S rRNA + S-adenosyl-L-homocysteine + H(+). Its function is as follows. Specifically methylates the N4 position of cytidine in position 1402 (C1402) of 16S rRNA. This is Ribosomal RNA small subunit methyltransferase H 1 from Acholeplasma laidlawii (strain PG-8A).